The sequence spans 375 residues: MSCPVIELTQQLIRRPSLSPDDAGCQALMIERLRKIGFTIEHMDFGDTQNFWAWRGRGETLAFAGHTDVVPAGDVDRWINPPFEPTIRDGMLFGRGAADMKGSLAAMVVAAERFVAQHPHHRGRLAFLITSDEEASAKNGTVKVVEALMARHERLDYCLVGEPSSTEIVGDVVKNGRRGSLTCNLTIHGVQGHVAYPHLADNPVHRAAPFLNELVAIEWDRGNDFFPATSMQVANIQAGTGSNNVIPGELFVQFNFRFSTELTDEMIKERVHALLEKHQLRYTVDWWLSGQPFLTARGKLVDAVVNAIEHYNEIKPQLLTTGGTSDGRFIARMGAQVVELGPVNATIHKINECVNAADLQLLARMYQRIMEQLVA.

Residue H66 coordinates Zn(2+). Residue D68 is part of the active site. Position 99 (D99) interacts with Zn(2+). E133 acts as the Proton acceptor in catalysis. Zn(2+) contacts are provided by E134, E162, and H348.

It belongs to the peptidase M20A family. DapE subfamily. In terms of assembly, homodimer. Requires Zn(2+) as cofactor. Co(2+) serves as cofactor.

The enzyme catalyses N-succinyl-(2S,6S)-2,6-diaminopimelate + H2O = (2S,6S)-2,6-diaminopimelate + succinate. Its pathway is amino-acid biosynthesis; L-lysine biosynthesis via DAP pathway; LL-2,6-diaminopimelate from (S)-tetrahydrodipicolinate (succinylase route): step 3/3. Functionally, catalyzes the hydrolysis of N-succinyl-L,L-diaminopimelic acid (SDAP), forming succinate and LL-2,6-diaminopimelate (DAP), an intermediate involved in the bacterial biosynthesis of lysine and meso-diaminopimelic acid, an essential component of bacterial cell walls. This chain is Succinyl-diaminopimelate desuccinylase, found in Salmonella agona (strain SL483).